Here is a 327-residue protein sequence, read N- to C-terminus: Ribonucleoside-diphosphate reductase small chain (327 aa).

Fe cation is bound by residues Asp70, Glu101, and His104. Tyr108 is an active-site residue. Residues Glu164, Glu198, and His201 each contribute to the Fe cation site.

The protein belongs to the ribonucleoside diphosphate reductase small chain family. In terms of assembly, heterotetramer composed of a homodimer of the large subunit (R1) and a homodimer of the small subunit (R2). Larger multisubunit protein complex are also active, composed of (R1)n(R2)n. The cofactor is Fe cation.

The enzyme catalyses a 2'-deoxyribonucleoside 5'-diphosphate + [thioredoxin]-disulfide + H2O = a ribonucleoside 5'-diphosphate + [thioredoxin]-dithiol. Functionally, ribonucleoside-diphosphate reductase holoenzyme provides the precursors necessary for viral DNA synthesis. Allows virus growth in non-dividing cells. Catalyzes the biosynthesis of deoxyribonucleotides from the corresponding ribonucleotides. The polypeptide is Ribonucleoside-diphosphate reductase small chain (Ornithodoros (relapsing fever ticks)).